The chain runs to 549 residues: Longitudinals lacking protein, isoforms H/M/V (549 aa).

The BTB domain maps to 32–97 (VDCTLAAEGK…MYRGEVNISQ (66 aa)). Disordered regions lie at residues 115–200 (LSDN…SSVL) and 228–340 (SSGP…ASAS). Low complexity-rich tracts occupy residues 162 to 175 (SGDV…SSSP), 228 to 251 (SSGP…LTST), 263 to 293 (TSST…QTTS), and 329 to 340 (NSATGPNPASAS).

Mostly neuronal.

Its subcellular location is the nucleus. Its function is as follows. Putative transcription factor required for axon growth and guidance in the central and peripheral nervous systems. Repels CNS axons away from the midline by promoting the expression of the midline repellent sli and its receptor robo. This Drosophila melanogaster (Fruit fly) protein is Longitudinals lacking protein, isoforms H/M/V.